A 119-amino-acid polypeptide reads, in one-letter code: Chorion class CA protein ERA.1 (119 aa).

The N-terminal stretch at 1–21 is a signal peptide; that stretch reads MSTFAVLLLCVQACLIQNVYS. The left arm stretch occupies residues 22 to 55; the sequence is QCLGRVGPGGPPLGPYGGPLGGPGYGPVGYGGCG. Residues 56–103 form a central domain region; sequence GYGGSGIGNVAVAGELPVAGSTGVMGQVPVIGAVEFAGPACAVGSVSI. Positions 104 to 119 are right arm; that stretch reads SGACGPTCGCGGSPYY.

This sequence belongs to the chorion protein family.

Functionally, this protein is one of many from the eggshell of the silk moth. The protein is Chorion class CA protein ERA.1 (ERA.1) of Bombyx mori (Silk moth).